Consider the following 253-residue polypeptide: REF/SRPP-like protein Os05g0151300/LOC_Os05g05940 (253 aa).

Positions 1–26 (MADSGSDAPISNRPEEEVTVEKTPEM) are disordered. The segment covering 13 to 26 (RPEEEVTVEKTPEM) has biased composition (basic and acidic residues).

It belongs to the REF/SRPP family.

The sequence is that of REF/SRPP-like protein Os05g0151300/LOC_Os05g05940 from Oryza sativa subsp. japonica (Rice).